A 566-amino-acid polypeptide reads, in one-letter code: MQPIISFEQFNFQYKHAAQPTVKDITFHIYPGEKVLIAGRSGSGKSTLAHCMNGLIPFSYEGTSTGNILIAGKDPRKKSVFELSKHVGTILQDQDAQFIGLTVEEDVAFYLENECVNQDEMKKIVSESLKKVGMHTFHKQSPHELSGGQKQTVSLAGLLTTNAPMLLFDEPLANLDPASSLHTIELIKNIHKQYNKTIVIIEHRIEEMLNLDLDKIILIDEGEIVAIDTPERILASNILPSIGLREPMYIEGLKRLHFDSNNDVIYPLENLHKESISGVIKEWMEKKAFCKDTPTKKELLKVENLSFSYPNKQKGLENVNLSIYEGEIVALLGHNGAGKSTLAHSLIGINKTKNSRILIDGVNINSWSIRKRGEIIFYVMQNPNHMITQSTVIEEVSFTLKLKKVSKEEIKFRAEEALKICGLYPFRNWPIQALSYGQKKRLTIASVLTANPKLIILDEPTAGQDYYHYKQFMSFIRKLAKKGISFIFITHDMNLALEYADRAIVLHEGRIIANHTASIVLGHPATLQRANLKESSLFKLVKFSGIANPEKFMELYFDDIRREEGV.

2 consecutive ABC transporter domains span residues 5 to 246 and 300 to 533; these read ISFE…GLRE and LKVE…ANLK. ATP contacts are provided by residues 39 to 46 and 333 to 340; these read GRSGSGKS and GHNGAGKS.

Belongs to the ABC transporter superfamily.

The protein resides in the cell membrane. In terms of biological role, probably part of an ABC transporter complex. Responsible for energy coupling to the transport system. The sequence is that of Putative ABC transporter ATP-binding protein BT9727_2424 from Bacillus thuringiensis subsp. konkukian (strain 97-27).